Reading from the N-terminus, the 645-residue chain is ATP-dependent zinc metalloprotease FtsH (645 aa).

At Met1 to Lys6 the chain is on the cytoplasmic side. The chain crosses the membrane as a helical span at residues Phe7–Leu27. Residues Tyr28–Leu110 are Periplasmic-facing. A helical membrane pass occupies residues Phe111–Phe131. Residues Ala132–Asn645 are Cytoplasmic-facing. Gly204–Thr211 is a binding site for ATP. His426 is a Zn(2+) binding site. Glu427 is an active-site residue. Zn(2+) is bound by residues His430 and Asp503. A disordered region spans residues Ser623 to Asn645. Residues Glu634–Asn645 are compositionally biased toward basic and acidic residues.

In the central section; belongs to the AAA ATPase family. It in the C-terminal section; belongs to the peptidase M41 family. In terms of assembly, homohexamer. The cofactor is Zn(2+).

Its subcellular location is the cell inner membrane. Functionally, acts as a processive, ATP-dependent zinc metallopeptidase for both cytoplasmic and membrane proteins. Plays a role in the quality control of integral membrane proteins. In Kosmotoga olearia (strain ATCC BAA-1733 / DSM 21960 / TBF 19.5.1), this protein is ATP-dependent zinc metalloprotease FtsH.